A 141-amino-acid polypeptide reads, in one-letter code: Acetyltransferase YPN_1354 (141 aa).

An N-acetyltransferase domain is found at 1–141; that stretch reads MEIRIFQQDD…GKRLIVDQEY (141 aa).

It belongs to the acetyltransferase family. YpeA subfamily.

The chain is Acetyltransferase YPN_1354 from Yersinia pestis bv. Antiqua (strain Nepal516).